Consider the following 263-residue polypeptide: Acyl-[acyl-carrier-protein]--UDP-N-acetylglucosamine O-acyltransferase (263 aa).

The protein belongs to the transferase hexapeptide repeat family. LpxA subfamily. As to quaternary structure, homotrimer.

It localises to the cytoplasm. The catalysed reaction is a (3R)-hydroxyacyl-[ACP] + UDP-N-acetyl-alpha-D-glucosamine = a UDP-3-O-[(3R)-3-hydroxyacyl]-N-acetyl-alpha-D-glucosamine + holo-[ACP]. It participates in glycolipid biosynthesis; lipid IV(A) biosynthesis; lipid IV(A) from (3R)-3-hydroxytetradecanoyl-[acyl-carrier-protein] and UDP-N-acetyl-alpha-D-glucosamine: step 1/6. In terms of biological role, involved in the biosynthesis of lipid A, a phosphorylated glycolipid that anchors the lipopolysaccharide to the outer membrane of the cell. This chain is Acyl-[acyl-carrier-protein]--UDP-N-acetylglucosamine O-acyltransferase, found in Campylobacter jejuni subsp. doylei (strain ATCC BAA-1458 / RM4099 / 269.97).